Here is a 150-residue protein sequence, read N- to C-terminus: Major facilitator superfamily domain-containing 14C pseudogene (150 aa).

Residues 1 to 25 are disordered; it reads MSVEPPPELEEKAASEPEAGAMPEK. Residues 1–49 lie on the Extracellular side of the membrane; it reads MSVEPPPELEEKAASEPEAGAMPEKRAGAQAAGSTWLQGFGPPSVYHAA. The helical transmembrane segment at 50–70 threads the bilayer; it reads IVIFLEFFAWGLLTTPMLTVL. Topologically, residues 71–82 are cytoplasmic; it reads HETFSQHTFLMN. Residues 83–103 form a helical membrane-spanning segment; the sequence is GLIQGVKGLLSFLSAPLIGAL. Topologically, residues 104-111 are extracellular; sequence SDVWGRKP. A helical transmembrane segment spans residues 112 to 132; it reads FLLGTVFFTCFPIPLMRISPC. The Cytoplasmic portion of the chain corresponds to 133 to 150; it reads RVWWRAPVVPATCGRRMA.

Belongs to the major facilitator superfamily.

It is found in the membrane. This chain is Major facilitator superfamily domain-containing 14C pseudogene, found in Homo sapiens (Human).